Reading from the N-terminus, the 282-residue chain is Probable endonuclease 4 (282 aa).

Zn(2+) is bound by residues histidine 66, histidine 106, glutamate 143, aspartate 176, histidine 179, histidine 213, aspartate 226, histidine 228, and glutamate 258.

The protein belongs to the AP endonuclease 2 family. Zn(2+) is required as a cofactor.

It catalyses the reaction Endonucleolytic cleavage to 5'-phosphooligonucleotide end-products.. Functionally, endonuclease IV plays a role in DNA repair. It cleaves phosphodiester bonds at apurinic or apyrimidinic (AP) sites, generating a 3'-hydroxyl group and a 5'-terminal sugar phosphate. This is Probable endonuclease 4 from Aquifex aeolicus (strain VF5).